A 147-amino-acid chain; its full sequence is Large ribosomal subunit protein uL16 (147 aa).

Residues 1–16 (MLMPKRVKRRRVHRGR) are compositionally biased toward basic residues. The interval 1-20 (MLMPKRVKRRRVHRGRMTGQ) is disordered.

This sequence belongs to the universal ribosomal protein uL16 family. As to quaternary structure, part of the 50S ribosomal subunit.

In terms of biological role, binds 23S rRNA and is also seen to make contacts with the A and possibly P site tRNAs. This chain is Large ribosomal subunit protein uL16, found in Alkaliphilus metalliredigens (strain QYMF).